We begin with the raw amino-acid sequence, 24 residues long: TAEVMSXVTAXFGXALEEXXDEXG.

It belongs to the PBP/GOBP family. In terms of assembly, homodimer. As to expression, antenna.

In terms of biological role, present in the aqueous fluid surrounding olfactory sensory dendrites and are thought to aid in the capture and transport of hydrophobic odorants into and through this fluid. This chain is General odorant-binding protein, found in Antheraea polyphemus (Polyphemus moth).